A 229-amino-acid polypeptide reads, in one-letter code: Flagellar L-ring protein (229 aa).

Residues 1-23 (MLSRLGARALVCLAGVAMLAASG) form the signal peptide. C24 carries the N-palmitoyl cysteine lipid modification. The S-diacylglycerol cysteine moiety is linked to residue C24.

Belongs to the FlgH family. The basal body constitutes a major portion of the flagellar organelle and consists of four rings (L,P,S, and M) mounted on a central rod.

It localises to the cell outer membrane. The protein resides in the bacterial flagellum basal body. Functionally, assembles around the rod to form the L-ring and probably protects the motor/basal body from shearing forces during rotation. In Cupriavidus taiwanensis (strain DSM 17343 / BCRC 17206 / CCUG 44338 / CIP 107171 / LMG 19424 / R1) (Ralstonia taiwanensis (strain LMG 19424)), this protein is Flagellar L-ring protein.